The chain runs to 213 residues: ATP phosphoribosyltransferase (213 aa).

The protein belongs to the ATP phosphoribosyltransferase family. Short subfamily. Heteromultimer composed of HisG and HisZ subunits.

Its subcellular location is the cytoplasm. The catalysed reaction is 1-(5-phospho-beta-D-ribosyl)-ATP + diphosphate = 5-phospho-alpha-D-ribose 1-diphosphate + ATP. The protein operates within amino-acid biosynthesis; L-histidine biosynthesis; L-histidine from 5-phospho-alpha-D-ribose 1-diphosphate: step 1/9. Catalyzes the condensation of ATP and 5-phosphoribose 1-diphosphate to form N'-(5'-phosphoribosyl)-ATP (PR-ATP). Has a crucial role in the pathway because the rate of histidine biosynthesis seems to be controlled primarily by regulation of HisG enzymatic activity. The protein is ATP phosphoribosyltransferase of Saccharophagus degradans (strain 2-40 / ATCC 43961 / DSM 17024).